Reading from the N-terminus, the 221-residue chain is Orotate phosphoribosyltransferase (221 aa).

Lysine 26 serves as a coordination point for 5-phospho-alpha-D-ribose 1-diphosphate. 34–35 (FF) contacts orotate. 5-phospho-alpha-D-ribose 1-diphosphate is bound by residues 72–73 (YK), arginine 98, lysine 99, lysine 102, histidine 104, and 123–131 (DDVISAGTS). Orotate contacts are provided by serine 127 and arginine 155.

This sequence belongs to the purine/pyrimidine phosphoribosyltransferase family. PyrE subfamily. As to quaternary structure, homodimer. Mg(2+) serves as cofactor.

The catalysed reaction is orotidine 5'-phosphate + diphosphate = orotate + 5-phospho-alpha-D-ribose 1-diphosphate. It functions in the pathway pyrimidine metabolism; UMP biosynthesis via de novo pathway; UMP from orotate: step 1/2. In terms of biological role, catalyzes the transfer of a ribosyl phosphate group from 5-phosphoribose 1-diphosphate to orotate, leading to the formation of orotidine monophosphate (OMP). The polypeptide is Orotate phosphoribosyltransferase (Herminiimonas arsenicoxydans).